A 92-amino-acid polypeptide reads, in one-letter code: Small ribosomal subunit protein uS19c (92 aa).

The interval 73–92 is disordered; that stretch reads EFSPTRTYRGHAKKDKKAKR. Residues 80–92 are compositionally biased toward basic residues; the sequence is YRGHAKKDKKAKR.

The protein belongs to the universal ribosomal protein uS19 family.

It is found in the plastid. Its subcellular location is the chloroplast. Functionally, protein S19 forms a complex with S13 that binds strongly to the 16S ribosomal RNA. This is Small ribosomal subunit protein uS19c (rps19) from Chlamydomonas reinhardtii (Chlamydomonas smithii).